Consider the following 317-residue polypeptide: Carbonic anhydrase 5B, mitochondrial (317 aa).

The N-terminal 33 residues, 1 to 33, are a transit peptide targeting the mitochondrion; sequence MTVMSHLRVSLQVSSCTLLWRRFRVPRLVPLRS. The Alpha-carbonic anhydrase domain maps to 37 to 296; it reads YTCTYRTRNR…LMNRTVRSSF (260 aa). His130, His132, and His155 together coordinate Zn(2+). Residue 235 to 236 participates in substrate binding; the sequence is TT.

The protein belongs to the alpha-carbonic anhydrase family. Requires Zn(2+) as cofactor.

It localises to the mitochondrion. It carries out the reaction hydrogencarbonate + H(+) = CO2 + H2O. Mitochondrial carbonic anhydrase that catalyzes the reversible conversion of carbon dioxide to bicarbonate/HCO3. The chain is Carbonic anhydrase 5B, mitochondrial (Ca5b) from Rattus norvegicus (Rat).